The primary structure comprises 421 residues: Expansin-like protein DDB_G0293186 (421 aa).

An N-terminal signal peptide occupies residues Met1–Ser20. Asn19 carries an N-linked (GlcNAc...) asparagine glycan. An Expansin-like EG45 domain is found at Gly43–Tyr139. 2 cysteine pairs are disulfide-bonded: Cys46–Cys70 and Cys73–Cys134. Asn117 and Asn391 each carry an N-linked (GlcNAc...) asparagine glycan.

The protein belongs to the expansin family. Expansin A subfamily.

Its subcellular location is the secreted. In terms of biological role, may serve to lubricate the movement of the cellulose microfibrils during cell growth and wall extension and/or may serve to maintain the fluid state of the slug cell wall. The sequence is that of Expansin-like protein DDB_G0293186 from Dictyostelium discoideum (Social amoeba).